Here is a 392-residue protein sequence, read N- to C-terminus: Na(+)/H(+) antiporter NhaA (392 aa).

The next 11 helical transmembrane spans lie at 16-36 (ILLIIVTVLALILQNSFLSAA), 58-78 (LLLWVNDGLMAIFFFLIGLEV), 93-113 (ITLPGIAAVGGMIVPALIFIL), 124-144 (GWAIPTATDIAFALGILSLLG), 153-173 (IFLMALSIIDDLGAIVIIALF), 176-196 (TDLSTLSITVAAISLAILFIM), 199-219 (MDVAIKSAYIVIGIILWVSVL), 257-277 (DLHYWVAFLILPLFAFVNAGV), 295-315 (VMLGLFVGKQAGVFGFSWLAI), 328-348 (WMMLYGVSVLTGIGFTMSLFV), and 362-382 (ADKLAILLGSFLSAATGYLIL).

The protein belongs to the NhaA Na(+)/H(+) (TC 2.A.33) antiporter family.

It localises to the cell inner membrane. The catalysed reaction is Na(+)(in) + 2 H(+)(out) = Na(+)(out) + 2 H(+)(in). Functionally, na(+)/H(+) antiporter that extrudes sodium in exchange for external protons. This is Na(+)/H(+) antiporter NhaA from Sulfurovum sp. (strain NBC37-1).